The chain runs to 146 residues: Hemoglobin subunit beta (146 aa).

Val1 is modified (N-acetylvaline). Positions 2–146 constitute a Globin domain; the sequence is HLTADEKSAV…VATALGHKYH (145 aa). Thr12 is subject to Phosphothreonine. Phosphoserine is present on Ser44. Lys59 is subject to N6-acetyllysine. Residue His63 participates in heme b binding. Lys82 is modified (N6-acetyllysine). A heme b-binding site is contributed by His92. Cys93 carries the S-nitrosocysteine modification. N6-acetyllysine is present on Lys144.

Belongs to the globin family. Heterotetramer of two alpha chains and two beta chains. Red blood cells.

In terms of biological role, involved in oxygen transport from the lung to the various peripheral tissues. This is Hemoglobin subunit beta (HBB) from Antrozous pallidus (Pallid bat).